A 96-amino-acid chain; its full sequence is Co-chaperonin GroES (96 aa).

It belongs to the GroES chaperonin family. Heptamer of 7 subunits arranged in a ring. Interacts with the chaperonin GroEL.

It is found in the cytoplasm. Together with the chaperonin GroEL, plays an essential role in assisting protein folding. The GroEL-GroES system forms a nano-cage that allows encapsulation of the non-native substrate proteins and provides a physical environment optimized to promote and accelerate protein folding. GroES binds to the apical surface of the GroEL ring, thereby capping the opening of the GroEL channel. The protein is Co-chaperonin GroES of Neisseria gonorrhoeae (strain ATCC 700825 / FA 1090).